The sequence spans 510 residues: Light-independent protochlorophyllide reductase subunit B (510 aa).

Asp36 serves as a coordination point for [4Fe-4S] cluster. The Proton donor role is filled by Asp297. 432 to 433 contacts substrate; the sequence is GM.

Belongs to the ChlB/BchB/BchZ family. In terms of assembly, protochlorophyllide reductase is composed of three subunits; ChlL, ChlN and ChlB. Forms a heterotetramer of two ChlB and two ChlN subunits. [4Fe-4S] cluster is required as a cofactor.

The protein resides in the plastid. It is found in the chloroplast. The enzyme catalyses chlorophyllide a + oxidized 2[4Fe-4S]-[ferredoxin] + 2 ADP + 2 phosphate = protochlorophyllide a + reduced 2[4Fe-4S]-[ferredoxin] + 2 ATP + 2 H2O. Its pathway is porphyrin-containing compound metabolism; chlorophyll biosynthesis (light-independent). In terms of biological role, component of the dark-operative protochlorophyllide reductase (DPOR) that uses Mg-ATP and reduced ferredoxin to reduce ring D of protochlorophyllide (Pchlide) to form chlorophyllide a (Chlide). This reaction is light-independent. The NB-protein (ChlN-ChlB) is the catalytic component of the complex. The polypeptide is Light-independent protochlorophyllide reductase subunit B (Pinus koraiensis (Korean pine)).